The chain runs to 1193 residues: Protein diaphanous homolog 3 (1193 aa).

Over residues 1 to 10 (MERHQPRLHH) the composition is skewed to basic residues. The segment at 1–57 (MERHQPRLHHPAQGSAAGTPYPSSASLRGCRESKMPRRKGPQHPPPPSGPEEPGEKR) is disordered. Serine 26 carries the post-translational modification Phosphoserine. The Nuclear localization signal motif lies at 36 to 60 (PRRKGPQHPPPPSGPEEPGEKRPKF). Position 68 is a phosphothreonine (threonine 68). Residues serine 77 and serine 175 each carry the phosphoserine modification. One can recognise a GBD/FH3 domain in the interval 114 to 476 (PKPLSENELL…QIVLHRDGMD (363 aa)). Residues 497–554 (IDQAKLEEFEEKASELYKKFEKEFTDHQETQAELQKKEAKINELQAELQAFKSQFGAL) adopt a coiled-coil conformation. Residues 558 to 622 (CNIPLPPSKE…PPPLGFLGGQ (65 aa)) form a disordered region. An FH1 domain is found at 561 to 631 (PLPPSKEGGT…QNSPPLPILP (71 aa)). Positions 575 to 600 (LPPPPPLPSGGGVPPPPPPPPPPPLP) are enriched in pro residues. Phosphoserine is present on serine 624. The 399-residue stretch at 636–1034 (PKKEFKPEIS…EKRVRIAKEL (399 aa)) folds into the FH2 domain. Residues 1013–1056 (KENIKKREAEEKEKRVRIAKELAERERLERQQKKKRLLEMKTEG) adopt a coiled-coil conformation. Residues 1057–1087 (DETGVMDNLLEALQSGAAFRDRRKRTPMPKD) enclose the DAD domain. Serine 1093 and serine 1179 each carry phosphoserine. The Nuclear export signal signature appears at 1184–1193 (EALLARLRAL).

This sequence belongs to the formin homology family. Diaphanous subfamily. Post-translationally, ubiquitinated.

It is found in the cytoplasm. Its subcellular location is the nucleus. In terms of biological role, actin nucleation and elongation factor required for the assembly of F-actin structures, such as actin cables and stress fibers. Required for cytokinesis, stress fiber formation and transcriptional activation of the serum response factor. Binds to GTP-bound form of Rho and to profilin: acts in a Rho-dependent manner to recruit profilin to the membrane, where it promotes actin polymerization. DFR proteins couple Rho and Src tyrosine kinase during signaling and the regulation of actin dynamics. Also acts as an actin nucleation and elongation factor in the nucleus by promoting nuclear actin polymerization inside the nucleus to drive serum-dependent SRF-MRTFA activity. The chain is Protein diaphanous homolog 3 (DIAPH3) from Homo sapiens (Human).